Consider the following 424-residue polypeptide: CinA-like protein (424 aa).

The protein belongs to the CinA family.

The chain is CinA-like protein from Shewanella amazonensis (strain ATCC BAA-1098 / SB2B).